The sequence spans 800 residues: Nuclear poly(A) polymerase 2 (800 aa).

ATP-binding positions include 103 to 105 (FGS), 115 to 118 (ADID), aspartate 171, lysine 232, tyrosine 241, and 250 to 251 (GV). Mg(2+) contacts are provided by aspartate 116, aspartate 118, and aspartate 171. Short sequence motifs (nuclear localization signal) lie at residues 487–494 (RRRQLPSF) and 533–540 (KRKNDDEI). Positions 497–576 (PNGYKRSRQS…SGITTSGTPQ (80 aa)) are disordered. Residues 527–538 (SVERYAKRKNDD) are compositionally biased toward basic and acidic residues. Positions 564-575 (PDSSGITTSGTP) are enriched in polar residues.

The protein belongs to the poly(A) polymerase family. As to quaternary structure, monomer. Forms a complex with cleavage and polyadenylation specificity factor (CPSF) subunits CPSF100, CPSF30, FIPS5 and PABN2. Requires Mg(2+) as cofactor. It depends on Mn(2+) as a cofactor. Mostly expressed in flowers (highly in the style, receptacle and pedicel, but weakly in the vasculature of sepals) and hypocotyls, and, to a lower extent, in roots and stems. Barely detected in leaves (petioles and vascular system).

It is found in the nucleus. Its subcellular location is the cytoplasm. The catalysed reaction is RNA(n) + ATP = RNA(n)-3'-adenine ribonucleotide + diphosphate. Essential protein. Polymerase that creates the 3'-poly(A) tail of mRNA's. Also required for the endoribonucleolytic cleavage reaction at some polyadenylation sites. May acquire specificity through interaction with a cleavage and polyadenylation specificity factor (CPSF) at its C-terminus. Mediates the polyadenylation of RNAs that are associated with polynucleotide phosphorylase (e.g. PNP1). This Arabidopsis thaliana (Mouse-ear cress) protein is Nuclear poly(A) polymerase 2.